A 927-amino-acid polypeptide reads, in one-letter code: MSKKRLHEIAKEIGKTSKEVVEQAQSLGLPVKSHASSVEENDATRIVESFSSSKTKAPTNSVQTNQGVKTESKTVETKQGLSDDKPSTQPVAKPKPQSRNFKAEREARAKAEAEKRQHNGDHRKNNRHNDTRSDDRRHQGQKRSNGNRNDNRQGQQNNRNKNDGRYADHKQKPQTRPQQPAGNRIDFKARAAALKAEQNAEYSRHSEQRFREEQEAKRQAAKEQELAKAAALKAQEEAQKAKEKLASKPVAKVKEIVNKVAATPSQTADSRRKKQTRSDKSRQFSNENEDGQKQTKNKKNWNNQNQVRNQRNSNWNHNKKNKKGKTNGAPKPVTERKFHELPKEFEYTEGMTVAEIAKRIKREPAEIVKKLFMMGVMATQNQSLDGDTIELLMVDYGIEAHAKVEVDEADIERFFADEDYLNPDNLTERPPVVTIMGHVDHGKTTLLDTLRNSRVATGEAGGITQHIGAYQIEEAGKKITFLDTPGHAAFTSMRARGASVTDITILIVAADDGVMPQTVEAINHSKAAGVPIIVAINKIDKPGANPERVISELAEHGVISTAWGGESEFVEISAKFGKNIQELLETVLLVAEMEELKADADVRAIGTVIEARLDKGKGAVATLLVQQGTLNVQDPIVVGNTFGRVRAMTNDLGRRVKVAGPSTPVSITGLNEAPMAGDHFAVYADEKAARAAGEERAKRALLKQRQNTQRVSLENLFDTLKAGEVKSVNVIIKADVQGSVEALAASLLKIDVEGVKVNVVHSAVGAINESDVTLAEASNAVIIGFNVRPTPQARQQADADDVEIRQHSIIYKVIEEVEEAMKGKLDPEYQEKILGEAIIRETFKVSKVGTIGGFMVINGKVTRDSSVRVIRDGVVIFDGKLASLKHYKDDVKEVGNAQEGGLMIENYNDLKEDDTIEAYIMEEIKRK.

Residues 27-338 form a disordered region; it reads LGLPVKSHAS…APKPVTERKF (312 aa). The segment covering 49–69 has biased composition (polar residues); that stretch reads SFSSSKTKAPTNSVQTNQGVK. 2 stretches are compositionally biased toward basic and acidic residues: residues 70-86 and 101-138; these read TESKTVETKQGLSDDKP and FKAEREARAKAEAEKRQHNGDHRKNNRHNDTRSDDRRH. The segment covering 146–159 has biased composition (low complexity); that stretch reads GNRNDNRQGQQNNR. Basic and acidic residues-rich tracts occupy residues 160–171, 202–226, and 234–257; these read NKNDGRYADHKQ, YSRHSEQRFREEQEAKRQAAKEQEL, and AQEEAQKAKEKLASKPVAKVKEIV. Residues 300 to 316 show a composition bias toward low complexity; sequence NWNNQNQVRNQRNSNWN. One can recognise a tr-type G domain in the interval 428–597; that stretch reads ERPPVVTIMG…LLVAEMEELK (170 aa). A G1 region spans residues 437–444; the sequence is GHVDHGKT. Residue 437–444 participates in GTP binding; it reads GHVDHGKT. A G2 region spans residues 462-466; it reads GITQH. Positions 483-486 are G3; that stretch reads DTPG. GTP is bound by residues 483-487 and 537-540; these read DTPGH and NKID. The tract at residues 537–540 is G4; it reads NKID. Residues 573–575 form a G5 region; the sequence is SAK.

This sequence belongs to the TRAFAC class translation factor GTPase superfamily. Classic translation factor GTPase family. IF-2 subfamily.

It is found in the cytoplasm. Its function is as follows. One of the essential components for the initiation of protein synthesis. Protects formylmethionyl-tRNA from spontaneous hydrolysis and promotes its binding to the 30S ribosomal subunits. Also involved in the hydrolysis of GTP during the formation of the 70S ribosomal complex. The polypeptide is Translation initiation factor IF-2 (Streptococcus agalactiae serotype Ia (strain ATCC 27591 / A909 / CDC SS700)).